Consider the following 920-residue polypeptide: MEEYKDTLNLNTTTFSMKGNLSVNEPKTYAKWQEQQAFKRMQARKDNHGDFTLHDGPPYANGHLHLGHALNKILKDIVVKREYFKGKKIYYTPGWDCHGLPIEQQILERLEKEKTSLENPTLFREKCRDHAKKFLEIQKNEFLQLGVLGDFEDPYKTMDFKFEASIYRALVEVAKKGLLKERHKPIYWSYACESALAEAEVEYKMKKSPSIFVAFGLKKESLEKLKVKKASLVIWTTTPWTLYANVAIALKKDAVYALTQKGYLVAKALHEKLAALGVVDNEITHEFNSNDLEYLVATNPLNQRDSLVALGEHVGLEDGTGAVHTAPGHGEEDYYLGLRYNLEVLMSVDEKGCYDEGIIHNQLLDESYLGEHVFKAQKRIIEQLGDSLLLEQEIEHSYPHCWRTHKPVIYRATTQWFILMDEPFIQNDGSQKTLREVALDAIEKVEFVPSSGKNRLKTMIENRPDWCLSRQRKWGVPLAFFIDKRTNKPCFESEVLEHVANLFEKKGCDVWWEYSVKDLLPPSYQEDAKHYEKIMHILDVWFDSGSTFKAVLEDYHGEKGQSPSDVILEGSDQHRGWFQSSLLIGCVLNNQAPFKKVITHGFIVDEKGEKMSKSKGNVVSLDKLLKTHGSDVVRLWVAFNDYQNDLRVSQTFFTQTEQHYKKFRNTLKFLLANFSDMDLKNLERPHNFSPLDHFMLETLETISAGVNSAFEEHDFVKGLNILMAFVTNELSGIYLDACKDSLYCDSKNNEKRQAIQMVLLATASKLCYFLAPILTHTIEEVLEHSQALRIFLQAKDVFDLKDISVSEKLHLKEFKKPENFEAVLALRSAFNEELDRLKKEGVIKNSLECAIEVKEKALDENLVEELLMVSFVGIAKEKLSETPAFTLFKAPFYKCPRCWRFKSELENTPCKRCEQVLKER.

A 'HIGH' region motif is present at residues 58 to 68; the sequence is PYANGHLHLGH. Residue E569 participates in L-isoleucyl-5'-AMP binding. The 'KMSKS' region motif lies at 610 to 614; the sequence is KMSKS. K613 lines the ATP pocket. 4 residues coordinate Zn(2+): C895, C898, C910, and C913.

The protein belongs to the class-I aminoacyl-tRNA synthetase family. IleS type 1 subfamily. In terms of assembly, monomer. It depends on Zn(2+) as a cofactor.

It localises to the cytoplasm. The catalysed reaction is tRNA(Ile) + L-isoleucine + ATP = L-isoleucyl-tRNA(Ile) + AMP + diphosphate. In terms of biological role, catalyzes the attachment of isoleucine to tRNA(Ile). As IleRS can inadvertently accommodate and process structurally similar amino acids such as valine, to avoid such errors it has two additional distinct tRNA(Ile)-dependent editing activities. One activity is designated as 'pretransfer' editing and involves the hydrolysis of activated Val-AMP. The other activity is designated 'posttransfer' editing and involves deacylation of mischarged Val-tRNA(Ile). The chain is Isoleucine--tRNA ligase from Helicobacter pylori (strain ATCC 700392 / 26695) (Campylobacter pylori).